The chain runs to 962 residues: Nonribosomal peptide synthetase atqA (962 aa).

The tract at residues 34–462 is adenylation (A) domain; the sequence is AANTTEGIIA…DGRTKEMVNI (429 aa). Residues 595-672 form the Carrier domain; the sequence is SAEEATILSI…GLCQRIAATS (78 aa). S630 is modified (O-(pantetheine 4'-phosphoryl)serine). The interval 694–951 is thioesterase (TE) domain; that stretch reads PLWLVHPGVG…KPEYVANFAK (258 aa).

It belongs to the NRP synthetase family.

It participates in secondary metabolite biosynthesis. Its function is as follows. Nonribosomal peptide synthetase; part of the gene cluster that mediates the biosynthesis of asterriquinone CT5, a natural product that displays potential biological activities including antitumor and insulin mimic activities. The nonribosomal peptide synthetase atqA is responsible for the production of the benzoquinone derivative didemethylasterriquinone D (DDAQ D), via condensation of 2 indole pyruvic acid (IPA) molecules. The symmetric connectivity of the 2 IPA molecules is thought to arise by head-to-tail dual Claisen condensations catalyzed by the TE domain of atqA. DDAQ D represents the core structure of asterriquinones and is further modified by yet unidentified tailoring enzymes to lead to the production of asterriquinone CT5. The chain is Nonribosomal peptide synthetase atqA from Aspergillus terreus (strain NIH 2624 / FGSC A1156).